The chain runs to 981 residues: GPI ethanolamine phosphate transferase 1 (981 aa).

Topologically, residues 1-6 are cytoplasmic; the sequence is MAGSSR. Residues 7–27 form a helical membrane-spanning segment; sequence IGFMAIAVAFHLVYILSIFDI. Over 28–464 the chain is Lumenal; that stretch reads YFVSPIVTGM…LQTYDWLFLR (437 aa). N-linked (GlcNAc...) asparagine glycosylation is found at asparagine 148, asparagine 211, and asparagine 295. Residues 465–485 traverse the membrane as a helical segment; the sequence is ALITIGYLGWMAYATTTVLSL. Residues 486 to 496 are Cytoplasmic-facing; that stretch reads YVVKESMSPQR. The chain crosses the membrane as a helical span at residues 497–517; the sequence is TLLGSAFFLSLLVALYSSFII. Topologically, residues 518 to 519 are lumenal; that stretch reads SK. Residues 520–540 traverse the membrane as a helical segment; sequence SPPAYYLYAFFPVLFWEEVYA. Residues 541-560 lie on the Cytoplasmic side of the membrane; the sequence is RRANVAKGFQALFGHVKSGG. The helical transmembrane segment at 561 to 581 threads the bilayer; sequence AVVALVFNVVLYLGVIQSLAL. Topologically, residues 582–587 are lumenal; the sequence is AYIHRE. Residues 588–608 traverse the membrane as a helical segment; the sequence is ILTGLFVLGAFWPMTQGISFL. Over 609–611 the chain is Cytoplasmic; sequence RSH. The helical transmembrane segment at 612-632 threads the bilayer; it reads LFLSMLWFFSCLAMSTFTLLP. Over 633–638 the chain is Lumenal; the sequence is AMKVED. A helical transmembrane segment spans residues 639–659; it reads IPLIMAGGGLMTFVGLAYLVL. Topologically, residues 660–681 are cytoplasmic; it reads EDFILSDVSSSKTKLKRLHTSR. A helical membrane pass occupies residues 682–702; the sequence is TLLGIQVGLIILAMLVTHSSA. The Lumenal portion of the chain corresponds to 703 to 708; that stretch reads TSLQAK. A helical transmembrane segment spans residues 709-729; the sequence is LGLPKGNQIVGWFVLVTSLLM. The Cytoplasmic segment spans residues 730–744; the sequence is PLAYRLQPNSHYMHR. The helical transmembrane segment at 745–767 threads the bilayer; sequence LAIIFLTCAPTFVILTISYEGLF. Residues 768–819 lie on the Lumenal side of the membrane; sequence YVAFSITLLSWVRLEYAVDAFTQEKAKKQATVAGSQQHTPSTFRPLSLSDAR. Residues 820–840 form a helical membrane-spanning segment; sequence IALFFMVLLQSAFFSTGNIAS. Residues 841–862 are Cytoplasmic-facing; that stretch reads ISSFSLESVSRLIPVFDPFSQG. A helical transmembrane segment spans residues 863-883; sequence ALLILKIIIPFFLISANLGVL. The Lumenal portion of the chain corresponds to 884–892; sequence NKRLGVAPS. The chain crosses the membrane as a helical span at residues 893-913; sequence AIFMVVLTASDVLTLYFFWVV. Residues 914–929 lie on the Cytoplasmic side of the membrane; that stretch reads KDEGSWLEIGSTITHF. Residues 930-950 form a helical membrane-spanning segment; sequence AIASFLCVFVAALEFVSAAFI. The Lumenal portion of the chain corresponds to 951–981; the sequence is AGIEVEDTKSAALTSASTKADEKVPPVAGAE.

It belongs to the PIGG/PIGN/PIGO family. PIGN subfamily.

The protein resides in the endoplasmic reticulum membrane. The protein operates within glycolipid biosynthesis; glycosylphosphatidylinositol-anchor biosynthesis. Functionally, ethanolamine phosphate transferase involved in glycosylphosphatidylinositol-anchor biosynthesis. Transfers ethanolamine phosphate to the first alpha-1,4-linked mannose of the glycosylphosphatidylinositol precursor of GPI-anchor. The protein is GPI ethanolamine phosphate transferase 1 (MCD4) of Gibberella zeae (strain ATCC MYA-4620 / CBS 123657 / FGSC 9075 / NRRL 31084 / PH-1) (Wheat head blight fungus).